A 180-amino-acid polypeptide reads, in one-letter code: Ribosome maturation factor RimM (180 aa).

The 73-residue stretch at 108-180 (PDEYYWVDLE…LIVVDWDPDF (73 aa)) folds into the PRC barrel domain.

Belongs to the RimM family. As to quaternary structure, binds ribosomal protein uS19.

Its subcellular location is the cytoplasm. In terms of biological role, an accessory protein needed during the final step in the assembly of 30S ribosomal subunit, possibly for assembly of the head region. Essential for efficient processing of 16S rRNA. May be needed both before and after RbfA during the maturation of 16S rRNA. It has affinity for free ribosomal 30S subunits but not for 70S ribosomes. The chain is Ribosome maturation factor RimM from Xanthomonas euvesicatoria pv. vesicatoria (strain 85-10) (Xanthomonas campestris pv. vesicatoria).